Consider the following 310-residue polypeptide: Putative S-adenosyl-L-methionine-dependent methyltransferase MAP_2076c (310 aa).

S-adenosyl-L-methionine is bound by residues D131 and D160–L161.

This sequence belongs to the UPF0677 family.

Exhibits S-adenosyl-L-methionine-dependent methyltransferase activity. The sequence is that of Putative S-adenosyl-L-methionine-dependent methyltransferase MAP_2076c from Mycolicibacterium paratuberculosis (strain ATCC BAA-968 / K-10) (Mycobacterium paratuberculosis).